Reading from the N-terminus, the 614-residue chain is Acetylcholinesterase (614 aa).

An N-terminal signal peptide occupies residues 1 to 31; it reads MRPPWYPLHTPSLAFPLLFLLLSLLGGGARA. Cys100 and Cys127 are disulfide-bonded. The active-site Acyl-ester intermediate is Ser234. Cysteines 288 and 303 form a disulfide. Asn296 carries an N-linked (GlcNAc...) asparagine glycan. The active-site Charge relay system is the Glu365. Asn381 carries an N-linked (GlcNAc...) asparagine glycan. Cysteines 440 and 560 form a disulfide. His478 serves as the catalytic Charge relay system. Asn495 carries N-linked (GlcNAc...) asparagine glycosylation.

The protein belongs to the type-B carboxylesterase/lipase family. Isoform H generates GPI-anchored dimers; disulfide linked. Isoform T generates multiple structures, ranging from monomers and dimers to collagen-tailed and hydrophobic-tailed forms, in which catalytic tetramers are associated with anchoring proteins that attach them to the basal lamina or to cell membranes. In the collagen-tailed forms, isoform T subunits are associated with a specific collagen, COLQ, which triggers the formation of isoform T tetramers, from monomers and dimers. Interacts with PRIMA1. The interaction with PRIMA1 is required to anchor it to the basal lamina of cells and organize into tetramers. Predominates in most expressing tissues except erythrocytes where a glycophospholipid-attached form of ACHE predominates.

Its subcellular location is the synapse. The protein resides in the secreted. It is found in the cell membrane. The enzyme catalyses acetylcholine + H2O = choline + acetate + H(+). Its function is as follows. Terminates signal transduction at the neuromuscular junction by rapid hydrolysis of the acetylcholine released into the synaptic cleft. In Mus musculus (Mouse), this protein is Acetylcholinesterase (Ache).